A 780-amino-acid chain; its full sequence is Pendrin (780 aa).

Residues 1 to 87 (MAAPGGRSEP…YRVKEWLLSD (87 aa)) lie on the Cytoplasmic side of the membrane. The helical transmembrane segment at 88 to 108 (VISGVSTGLVATLQGMAYALL) threads the bilayer. Position 109 (Ala-109) is a topological domain, extracellular. A helical transmembrane segment spans residues 110–130 (AVPVGYGLYSAFFPILTYFIF). Residues 131 to 135 (GTSRH) lie on the Cytoplasmic side of the membrane. The chain crosses the membrane as a helical span at residues 136-156 (ISVGPFPVVSLMVGSVVLSMA). The Extracellular segment spans residues 157–191 (PDEHFLVSSSNGTVLNTTMIDTAARDTARVLIASA). A helical transmembrane segment spans residues 192-212 (LTLLVGIIQLIFGGLQIGFIV). Topologically, residues 213–218 (RYLADP) are cytoplasmic. A helical membrane pass occupies residues 219 to 239 (LVGGFTTAAAFQVLVSQLKIV). The Extracellular segment spans residues 240-263 (LNVSTKNYNGVLSIIYTLVEIFQN). Residues 264-284 (IGDTNLADFTAGLLTIVVCMA) form a helical membrane-spanning segment. Residues 285 to 295 (VKELNDRFRHK) lie on the Cytoplasmic side of the membrane. Residues 296 to 316 (IPVPIPIEVIVTIIATAISYG) traverse the membrane as a helical segment. Topologically, residues 317–344 (ANLEKNYNAGIVKSIPRGFLPPELPPVS) are extracellular. Residues 345–365 (LFSEMLAASFSIAVVAYAIAV) form a helical membrane-spanning segment. The Cytoplasmic segment spans residues 366–384 (SVGKVYATKYDYTIDGNQE). The chain crosses the membrane as a helical span at residues 385 to 405 (FIAFGISNIFSGFFSCFVATT). Residues 406 to 421 (ALSRTAVQESTGGKTQ) lie on the Extracellular side of the membrane. A helical membrane pass occupies residues 422–442 (VAGIISAAIVMIAILALGKLL). Residues 443–448 (EPLQKS) are Cytoplasmic-facing. A helical membrane pass occupies residues 449–469 (VLAAVVIANLKGMFMQLCDIP). The Extracellular portion of the chain corresponds to 470-486 (RLWRQNKIDAVIWVFTC). A helical transmembrane segment spans residues 487-507 (IVSIILGLDLGLLAGLIFGLL). Over 508-780 (TVVLRVQFPS…QDEAMRTLAS (273 aa)) the chain is Cytoplasmic. Positions 535-729 (NYKNIEEPQG…LTVHDAILYL (195 aa)) constitute an STAS domain.

It belongs to the SLC26A/SulP transporter (TC 2.A.53) family. In terms of assembly, interacts with IQGAP1; this interaction enhances the chloride-bicarbonate exchange activity of SLC26A4. As to expression, highly expressed in the kidney (at protein level). High expression in adult thyroid, lower expression in adult and fetal kidney and fetal brain. Not expressed in other tissues.

Its subcellular location is the cell membrane. It is found in the apical cell membrane. The enzyme catalyses chloride(in) = chloride(out). The catalysed reaction is iodide(out) = iodide(in). It catalyses the reaction hydrogencarbonate(in) + chloride(out) = hydrogencarbonate(out) + chloride(in). It carries out the reaction iodide(in) + hydrogencarbonate(out) = iodide(out) + hydrogencarbonate(in). The enzyme catalyses iodide(in) + chloride(out) = iodide(out) + chloride(in). The catalysed reaction is formate(in) + chloride(out) = formate(out) + chloride(in). Its function is as follows. Sodium-independent transporter of chloride and iodide. Mediates electroneutral chloride-bicarbonate, chloride-iodide and chloride-formate exchange with 1:1 stoichiometry. Mediates electroneutral iodide-bicarbonate exchange. This chain is Pendrin (SLC26A4), found in Homo sapiens (Human).